The sequence spans 151 residues: MSSDWDSVTIIGQKARVGGGGPRENVAKTSSQLNAARRAGLVVGTEKKYGTANTKSNPEGQRLTKLDATDDVVAVKKVDVSVGKAIQQARQEKKLTQKELATKVNEKPNVINDYEAGRAIPNQQLLAKLERALGVKLRGKNIGEPLFAKKK.

A disordered region spans residues 1–32 (MSSDWDSVTIIGQKARVGGGGPRENVAKTSSQ). Residues 86-140 (IQQARQEKKLTQKELATKVNEKPNVINDYEAGRAIPNQQLLAKLERALGVKLRGK) form the HTH cro/C1-type domain. A DNA-binding region (H-T-H motif) is located at residues 97–116 (QKELATKVNEKPNVINDYEA).

Belongs to the MBF1 family.

In terms of biological role, transcriptional coactivator that stimulates GCN4-dependent transcriptional activity by bridging the DNA-binding region of GCN4 and TBP (SPT15), thereby recruiting TBP to GCN4-bound promoters. Involved in induction of the ribosome quality control (RQC) pathway; a pathway that degrades nascent peptide chains during problematic translation. Required to prevent stalled ribosomes from frameshifting. This Candida albicans (strain SC5314 / ATCC MYA-2876) (Yeast) protein is Multiprotein-bridging factor 1 (MBF1).